Reading from the N-terminus, the 385-residue chain is Probable alpha-galactosidase (385 aa).

A signal peptide spans Met1 to Ala19. Disulfide bonds link Cys40-Cys72 and Cys119-Cys149. Asp147 (nucleophile) is an active-site residue. Asp180–Glu184 serves as a coordination point for substrate. Asp202 (proton donor) is an active-site residue.

This sequence belongs to the glycosyl hydrolase 27 family.

The enzyme catalyses Hydrolysis of terminal, non-reducing alpha-D-galactose residues in alpha-D-galactosides, including galactose oligosaccharides, galactomannans and galactolipids.. In Dictyostelium discoideum (Social amoeba), this protein is Probable alpha-galactosidase (melA).